The chain runs to 290 residues: ATP synthase gamma chain (290 aa).

It belongs to the ATPase gamma chain family. As to quaternary structure, F-type ATPases have 2 components, CF(1) - the catalytic core - and CF(0) - the membrane proton channel. CF(1) has five subunits: alpha(3), beta(3), gamma(1), delta(1), epsilon(1). CF(0) has three main subunits: a, b and c.

Its subcellular location is the cell inner membrane. Produces ATP from ADP in the presence of a proton gradient across the membrane. The gamma chain is believed to be important in regulating ATPase activity and the flow of protons through the CF(0) complex. The chain is ATP synthase gamma chain from Erythrobacter litoralis (strain HTCC2594).